The chain runs to 355 residues: Phenylalanine--tRNA ligase alpha subunit (355 aa).

Glu-273 lines the Mg(2+) pocket.

This sequence belongs to the class-II aminoacyl-tRNA synthetase family. Phe-tRNA synthetase alpha subunit type 1 subfamily. In terms of assembly, tetramer of two alpha and two beta subunits. Mg(2+) serves as cofactor.

It is found in the cytoplasm. The catalysed reaction is tRNA(Phe) + L-phenylalanine + ATP = L-phenylalanyl-tRNA(Phe) + AMP + diphosphate + H(+). This is Phenylalanine--tRNA ligase alpha subunit from Bifidobacterium longum (strain NCC 2705).